We begin with the raw amino-acid sequence, 777 residues long: Acyl-CoA dehydrogenase family member 11 (777 aa).

FAD-binding positions include 501 to 511 (FCMTEPDVASS), 509 to 511 (ASS), 535 to 537 (WSS), and Ser-537. Position 511 (Ser-511) interacts with substrate. Residue 626 to 629 (GPGR) coordinates substrate. FAD contacts are provided by residues Arg-654, Gln-724, and 724–728 (QVCGG). Gly-752 lines the substrate pocket. Residues 753–755 (PDE) and Glu-755 each bind FAD.

This sequence belongs to the acyl-CoA dehydrogenase family. In terms of assembly, homodimer. Requires FAD as cofactor.

It is found in the peroxisome. The protein localises to the mitochondrion membrane. It catalyses the reaction a 2,3-saturated acyl-CoA + oxidized [electron-transfer flavoprotein] + H(+) = a (2E)-enoyl-CoA + reduced [electron-transfer flavoprotein]. The catalysed reaction is docosanoyl-CoA + oxidized [electron-transfer flavoprotein] + H(+) = (2E)-docosenoyl-CoA + reduced [electron-transfer flavoprotein]. The enzyme catalyses tetracosanoyl-CoA + oxidized [electron-transfer flavoprotein] + H(+) = (2E)-tetracosenoyl-CoA + reduced [electron-transfer flavoprotein]. It carries out the reaction eicosanoyl-CoA + oxidized [electron-transfer flavoprotein] + H(+) = (2E)-eicosenoyl-CoA + reduced [electron-transfer flavoprotein]. It catalyses the reaction hexacosanoyl-CoA + oxidized [electron-transfer flavoprotein] + H(+) = (2E)-hexacosenoyl-CoA + reduced [electron-transfer flavoprotein]. The catalysed reaction is tricosanoyl-CoA + oxidized [electron-transfer flavoprotein] + H(+) = (2E)-tricosenoyl-CoA + reduced [electron-transfer flavoprotein]. Its pathway is lipid metabolism; fatty acid beta-oxidation. Acyl-CoA dehydrogenase, that exhibits maximal activity towards saturated C22-CoA. Probably participates in beta-oxydation and energy production but could also play a role in the metabolism of specific fatty acids to control fatty acids composition of cellular lipids in brain. This chain is Acyl-CoA dehydrogenase family member 11 (ACAD11), found in Gallus gallus (Chicken).